A 580-amino-acid polypeptide reads, in one-letter code: F-box only protein 24 (580 aa).

Residues 36–82 enclose the F-box domain; the sequence is PISIQLFPPELVEHIISFLPVRDLVALGQTCRYFHEVCDGEGVWRRI. An RCC1 repeat occupies 376–425; that stretch reads GRIFMQGNNRYGQLGTGDKMDRGEPTQVCYLQRPITLWCGLNHSLVLSQS.

In terms of assembly, directly interacts with SKP1 and CUL1.

Its function is as follows. Substrate-recognition component of the SCF (SKP1-CUL1-F-box protein)-type E3 ubiquitin ligase complex. This is F-box only protein 24 (FBXO24) from Homo sapiens (Human).